We begin with the raw amino-acid sequence, 526 residues long: Peptide chain release factor 3 (526 aa).

Residues 9-277 (DKRRTFAIIS…GIVEWAPVPQ (269 aa)) form the tr-type G domain. Residues 18 to 25 (SHPDAGKT), 86 to 90 (DTPGH), and 140 to 143 (NKLD) contribute to the GTP site.

It belongs to the TRAFAC class translation factor GTPase superfamily. Classic translation factor GTPase family. PrfC subfamily.

It localises to the cytoplasm. Its function is as follows. Increases the formation of ribosomal termination complexes and stimulates activities of RF-1 and RF-2. It binds guanine nucleotides and has strong preference for UGA stop codons. It may interact directly with the ribosome. The stimulation of RF-1 and RF-2 is significantly reduced by GTP and GDP, but not by GMP. The protein is Peptide chain release factor 3 of Shewanella pealeana (strain ATCC 700345 / ANG-SQ1).